The chain runs to 212 residues: Fibrillarin-like rRNA/tRNA 2'-O-methyltransferase (212 aa).

Residues 73–74, 91–92, 116–117, and 136–139 contribute to the S-adenosyl-L-methionine site; these read TT, EI, DA, and DVAQ.

Belongs to the methyltransferase superfamily. Fibrillarin family. As to quaternary structure, interacts with nop5. Component of box C/D small ribonucleoprotein (sRNP) particles that contain rpl7ae, FlpA and nop5, plus a guide RNA.

Functionally, involved in pre-rRNA and tRNA processing. Utilizes the methyl donor S-adenosyl-L-methionine to catalyze the site-specific 2'-hydroxyl methylation of ribose moieties in rRNA and tRNA. Site specificity is provided by a guide RNA that base pairs with the substrate. Methylation occurs at a characteristic distance from the sequence involved in base pairing with the guide RNA. In Methanothrix thermoacetophila (strain DSM 6194 / JCM 14653 / NBRC 101360 / PT) (Methanosaeta thermophila), this protein is Fibrillarin-like rRNA/tRNA 2'-O-methyltransferase.